Consider the following 785-residue polypeptide: MQQKVLSALEFHKVKEQVIGHAASSLGKEMLLELKPSASIDEIKKQLDEVDEASDIIRLRGQAPFGGLVDIRGALRRAEIGSVLSPSEFTEISGLLYAVKQMKHFITQMAEDGVDIPLIHQHAEQLITLSDLERDINSCIDDHGEVLDHASETLRGIRTQLRTLESRVRDRLESMLRSSSASKMLSDTIVTIRNDRFVIPVKQEYRSSYGGIVHDTSSSGATLFIEPQAIVDMNNSLQQAKVKEKQEIERILRVLTEKTAEYTEELFLDLQVLQTLDFIFAKARYAKAVKATKPIMNDTGFIRLKKARHPLLPPDQVVANDIELGRDFSTIVITGPNTGGKTVTLKTLGLLTLMAQSGLHIPADEGSEAAVFEHVFADIGDEQSIEQSLSTFSSHMVNIVGILEQVNENSLVLFDELGAGTDPQEGAALAMSILDDVHRTNARVLATTHYPELKAYGYNREGVMNASVEFDIETLSPTYKLLIGVPGRSNAFEISKRLGLPDHIIGQAKSEMTAEHNEVDTMIASLEQSKKRAEEELSETESIRKEAEKLHKELQQQIIELNSKKDKMLEEAEQQAAEKVKAAMKEAEDIIHELRTIKEEHKSFKDHELINAKKRLEGAMPAFEKSKKPEKPKTQKRDFKPGDEVKVLTFGQKGTLLEKTGGNEWNVQIGILKMKVKEKDLEFIKSAPEPKKEKMITAVKGKDYHVSLELDLRGERYENALSRVEKYLDDAVLAGYPRVSIIHGKGTGALRKGVQDLLKNHRSVKSSRFGEAGEGGSGVTVVELK.

Gly-335 to Thr-342 contributes to the ATP binding site. Residues Thr-513–Glu-586 are a coiled coil. The interval Lys-636–Lys-785 is partially complements a deletion for mitomycin C (MMC) resistance and for chromosomal DNA transformation. A KOW region region spans residues Pro-641–Leu-681. A Smr domain is found at Leu-710–Lys-785.

This sequence belongs to the DNA mismatch repair MutS family. MutS2 subfamily. Binds to ribosomes as a homodimer. Binds to stalled/collided disomes, association is greater in (ribosome-targeted) antibiotic-treated cells (with increased stalling at specific mRNA sites). The clamp domain of one monomer binds the A-site finger, the 23S rRNA of the central protuberance and ribosomal protein uL5 of the leading (stalled) ribosome, while the other monomer binds in a gap between the ribosomal central protuberance and the L1 stalk of the leading ribosome.

The protein localises to the cytoplasm. Its function is as follows. Acts as a ribosome collision sensor splitting the ribosome into its 2 subunits. Detects stalled/collided disomes (pairs of ribosomes where the leading ribosome is stalled and a second ribosome has collided with it) which it binds and splits, by an ATP-hydrolysis driven conformational change. Does not seem to have endoribonuclease activity (in the context of ribosome stalling). Acts upstream of the ribosome quality control system (RQC), a ribosome-associated complex that mediates the extraction of incompletely synthesized nascent chains from stalled ribosomes and their subsequent degradation, probably generates substrates for RQC. Functionally, does not seem to be involved in mismatch repair or in the prevention of interspecific recombination during DNA transformation. Might be involved in homologous recombination. Putative endonuclease that may be involved in the suppression of homologous recombination and may therefore have a key role in the control of bacterial genetic diversity. In Bacillus subtilis (strain 168), this protein is Putative endonuclease MutS2.